Consider the following 1107-residue polypeptide: Polyphosphatidylinositol phosphatase INP53 (1107 aa).

One can recognise an SAC domain in the interval 142 to 482 (LKKLLSNGSF…GDQISQIYTG (341 aa)). Ser497 carries the phosphoserine modification. Positions 926–1107 (TASSVASSSP…LDSWQPLTPK (182 aa)) are disordered. A compositionally biased stretch (low complexity) spans 927-942 (ASSVASSSPVSSASAS). Residues 943 to 956 (LQPVRTQNSSQSRT) show a composition bias toward polar residues. Residue Ser986 is modified to Phosphoserine. Composition is skewed to polar residues over residues 987–1005 (PTPQ…NIQE), 1020–1038 (FSQN…SPMS), 1045–1063 (NSAS…QTPT), and 1097–1107 (TLDSWQPLTPK). The residue at position 1035 (Ser1035) is a Phosphoserine. Thr1105 bears the Phosphothreonine mark.

This sequence belongs to the synaptojanin family. The protein in the central section; belongs to the inositol 1,4,5-trisphosphate 5-phosphatase family. Interacts (via SAC domain) with BSP1; the interaction is direct. Interacts with CHC1.

The protein localises to the cytoplasm. The catalysed reaction is a 1,2-diacyl-sn-glycero-3-phospho-(1D-myo-inositol-4,5-bisphosphate) + H2O = a 1,2-diacyl-sn-glycero-3-phospho-(1D-myo-inositol 4-phosphate) + phosphate. Its function is as follows. Dephosphorylates a number of phosphatidylinositols (PIs) like phosphatidylinositol 4,5-bisphosphate (PtdIns(4,5)P2), but also phosphatidylinositol 3-phosphate (PtdIns(3)P), phosphatidylinositol 4-phosphate (PtdIns(4)P), and phosphatidylinositol 3,5-bisphosphate (PtdIns(3,5)P2). Controls the cellular levels and subcellular distribution of phosphatidylinositol 3-phosphate and phosphatidylinositol 4,5-bisphosphate. Plays an essential role in a TGN (trans Golgi network)-to-early endosome pathway. Involved in clathrin-mediated protein sorting at the TGN. The sequence is that of Polyphosphatidylinositol phosphatase INP53 (INP53) from Saccharomyces cerevisiae (strain ATCC 204508 / S288c) (Baker's yeast).